The following is a 274-amino-acid chain: Undecaprenyl-diphosphatase (274 aa).

8 helical membrane-spanning segments follow: residues 4–24 (LLVIKAIIMGIVEGITELLPI), 46–66 (VVFEIFIQMGAMLAIVWEYRV), 86–106 (INVAIAFFPAALVGFLFSDFI), 109–129 (VLFSPYVVAGGFIVGGVIIMW), 145–165 (ISYADAFNVGLCQCLALIPGT), 188–208 (FSFFLAIPMIGAASLYALWEA), 214–234 (IEDMGILAIGFITSFFVTFAV), and 250–270 (FAWYRIAFGLLVLATAYTGVI).

It belongs to the UppP family.

It localises to the cell inner membrane. The enzyme catalyses di-trans,octa-cis-undecaprenyl diphosphate + H2O = di-trans,octa-cis-undecaprenyl phosphate + phosphate + H(+). Catalyzes the dephosphorylation of undecaprenyl diphosphate (UPP). Confers resistance to bacitracin. This is Undecaprenyl-diphosphatase from Cellvibrio japonicus (strain Ueda107) (Pseudomonas fluorescens subsp. cellulosa).